The chain runs to 128 residues: Fatty acid binding protein 1-B.1 (128 aa).

It belongs to the calycin superfamily. Fatty-acid binding protein (FABP) family. As to expression, expressed in the yolk syncytial layer (YSL) and subsequently in the intestinal bulb in developing embryos and larvae. In adults, expressed in the intestine.

It localises to the cytoplasm. Functionally, binds free fatty acids and their coenzyme A derivatives, bilirubin, and some other small molecules in the cytoplasm. May be involved in intracellular lipid transport. The sequence is that of Fatty acid binding protein 1-B.1 (fabp1b.1) from Danio rerio (Zebrafish).